Here is a 119-residue protein sequence, read N- to C-terminus: Large ribosomal subunit protein uL18 (119 aa).

It belongs to the universal ribosomal protein uL18 family. As to quaternary structure, part of the 50S ribosomal subunit; part of the 5S rRNA/L5/L18/L25 subcomplex. Contacts the 5S and 23S rRNAs.

This is one of the proteins that bind and probably mediate the attachment of the 5S RNA into the large ribosomal subunit, where it forms part of the central protuberance. In Paracoccus denitrificans (strain Pd 1222), this protein is Large ribosomal subunit protein uL18.